The sequence spans 150 residues: 3-hydroxyacyl-[acyl-carrier-protein] dehydratase FabZ (150 aa).

The active site involves histidine 52.

Belongs to the thioester dehydratase family. FabZ subfamily.

Its subcellular location is the cytoplasm. The catalysed reaction is a (3R)-hydroxyacyl-[ACP] = a (2E)-enoyl-[ACP] + H2O. Involved in unsaturated fatty acids biosynthesis. Catalyzes the dehydration of short chain beta-hydroxyacyl-ACPs and long chain saturated and unsaturated beta-hydroxyacyl-ACPs. This is 3-hydroxyacyl-[acyl-carrier-protein] dehydratase FabZ from Variovorax paradoxus (strain S110).